The primary structure comprises 256 residues: Thiazole synthase (256 aa).

K95 serves as the catalytic Schiff-base intermediate with DXP. Residues G156, 182–183 (AG), and 204–205 (NT) contribute to the 1-deoxy-D-xylulose 5-phosphate site.

It belongs to the ThiG family. In terms of assembly, homotetramer. Forms heterodimers with either ThiH or ThiS.

The protein localises to the cytoplasm. It carries out the reaction [ThiS sulfur-carrier protein]-C-terminal-Gly-aminoethanethioate + 2-iminoacetate + 1-deoxy-D-xylulose 5-phosphate = [ThiS sulfur-carrier protein]-C-terminal Gly-Gly + 2-[(2R,5Z)-2-carboxy-4-methylthiazol-5(2H)-ylidene]ethyl phosphate + 2 H2O + H(+). It participates in cofactor biosynthesis; thiamine diphosphate biosynthesis. In terms of biological role, catalyzes the rearrangement of 1-deoxy-D-xylulose 5-phosphate (DXP) to produce the thiazole phosphate moiety of thiamine. Sulfur is provided by the thiocarboxylate moiety of the carrier protein ThiS. In vitro, sulfur can be provided by H(2)S. This chain is Thiazole synthase, found in Escherichia coli O17:K52:H18 (strain UMN026 / ExPEC).